We begin with the raw amino-acid sequence, 484 residues long: Synaptic vesicle membrane protein VAT-1 homolog (484 aa).

Low complexity-rich tracts occupy residues 1–13 (MSGEDAPAQQQNA) and 40–61 (SASTEAAATAAAAADTPAPAAE). Disordered regions lie at residues 1-65 (MSGE…KAPE) and 402-484 (IGKI…KEEN). A compositionally biased stretch (basic and acidic residues) spans 411 to 484 (PMKEEEKKEE…KKEEVKKEEN (74 aa)).

The protein belongs to the zinc-containing alcohol dehydrogenase family. Quinone oxidoreductase subfamily.

The polypeptide is Synaptic vesicle membrane protein VAT-1 homolog (Danio rerio (Zebrafish)).